The sequence spans 243 residues: Small ribosomal subunit protein uS3 (243 aa).

The KH type-2 domain maps to 39-110 (IRTFIQKKYS…QVRINVVEVE (72 aa)). Residues 221-243 (GAIPRRKGSRKPQQFEDRSNENS) form a disordered region. Residues 233-243 (QQFEDRSNENS) are compositionally biased toward basic and acidic residues.

It belongs to the universal ribosomal protein uS3 family. As to quaternary structure, part of the 30S ribosomal subunit. Forms a tight complex with proteins S10 and S14.

Binds the lower part of the 30S subunit head. Binds mRNA in the 70S ribosome, positioning it for translation. The sequence is that of Small ribosomal subunit protein uS3 from Prochlorococcus marinus subsp. pastoris (strain CCMP1986 / NIES-2087 / MED4).